Here is a 386-residue protein sequence, read N- to C-terminus: Chaperone protein DnaJ (386 aa).

A J domain is found at 6–70 (DYYEVLGVDK…QKRAAYDQYG (65 aa)). The segment at 141-223 (GKDTEVSYKR…CHGTGHEKKT (83 aa)) adopts a CR-type zinc-finger fold. Zn(2+) is bound by residues Cys154, Cys157, Cys171, Cys174, Cys197, Cys200, Cys211, and Cys214. CXXCXGXG motif repeat units follow at residues 154-161 (CHTCGGNG), 171-178 (CHKCKGSG), 197-204 (CDVCHGTG), and 211-218 (CETCHGTG). The segment at 363 to 386 (LTGQSTEEQQSEGFFDKMKDAFKK) is disordered. Polar residues predominate over residues 364–374 (TGQSTEEQQSE). A compositionally biased stretch (basic and acidic residues) spans 376–386 (FFDKMKDAFKK).

Belongs to the DnaJ family. In terms of assembly, homodimer. It depends on Zn(2+) as a cofactor.

Its subcellular location is the cytoplasm. Functionally, participates actively in the response to hyperosmotic and heat shock by preventing the aggregation of stress-denatured proteins and by disaggregating proteins, also in an autonomous, DnaK-independent fashion. Unfolded proteins bind initially to DnaJ; upon interaction with the DnaJ-bound protein, DnaK hydrolyzes its bound ATP, resulting in the formation of a stable complex. GrpE releases ADP from DnaK; ATP binding to DnaK triggers the release of the substrate protein, thus completing the reaction cycle. Several rounds of ATP-dependent interactions between DnaJ, DnaK and GrpE are required for fully efficient folding. Also involved, together with DnaK and GrpE, in the DNA replication of plasmids through activation of initiation proteins. The protein is Chaperone protein DnaJ of Tetragenococcus halophilus (Pediococcus halophilus).